A 679-amino-acid chain; its full sequence is MGDLPGGGGGAAGGAGAAGGGGGGGNGAAGSSSSGGGASGSGGGGPGSSGLPTTNGLGVAGTAGPNVDRPPSPARLSHTSEKHPKVTLTELNMLRRHRELCDVVLNVGGRKIFAHRVILSACSSYFCAMFTGELEESRQTEVTIRDIDENAMELLIDFCYTAHIIVEESNVQTLLPAACLLQLVEIQDICCEFLKRQLDPTNCLGIRAFADTHSCRELLRIADKFTQHNFQEVMESEEFLLLPVSQLVDIICSDELNVRSEEQVFNAVMSWLKYNVAERRQHLAQVLQHVRLPLLSPKFLVGTVGSDLLVRSDEACRDLVDEAKNYLLLPQERPLMQGPRTRPRKPTRRGEVLFAVGGWCSGDAIASVERFDPQTNDWKMVAPMSKRRCGVGVAVLNDLLYAVGGHDGQSYLNSIERYDPQTNQWSCDVAPTTSCRTSVGVAVLDGFLYAVGGQDGVQCLNHVERYDPKDNKWGKVAPMTTRRLGVAVAVLGGYLYAIGGSDGQCPLNTVERYDPRQNKWVAVNPMSTRRKHLGCAVFNNYIYAVGGRDDCMELSSAERYNPLTNTWSPIVAMTSRRSGVGLAVVNGQLYAVGGFDGSAYLKTIEVYDPETNQWRLCGCMNYRRLGGGVGVMRAPQTENYMWCDNNSSNNNNNNYNLKHQQQQPQQQQQQQQQQTQQQL.

The span at 1–48 (MGDLPGGGGGAAGGAGAAGGGGGGGNGAAGSSSSGGGASGSGGGGPGS) shows a compositional bias: gly residues. A disordered region spans residues 1-84 (MGDLPGGGGG…RLSHTSEKHP (84 aa)). The region spanning 101–168 (CDVVLNVGGR…CYTAHIIVEE (68 aa)) is the BTB domain. The 103-residue stretch at 203-305 (CLGIRAFADT…SPKFLVGTVG (103 aa)) folds into the BACK domain. Kelch repeat units follow at residues 352 to 398 (VLFA…VLND), 400 to 446 (LYAV…VLDG), 447 to 493 (FLYA…VLGG), 495 to 540 (LYAI…VFNN), 542 to 587 (IYAV…VVNG), and 588 to 634 (QLYA…VMRA). The interval 643 to 679 (CDNNSSNNNNNNYNLKHQQQQPQQQQQQQQQQTQQQL) is disordered. The segment covering 645–679 (NNSSNNNNNNYNLKHQQQQPQQQQQQQQQQTQQQL) has biased composition (low complexity).

It participates in protein modification; protein ubiquitination. Probable substrate-specific adapter of an E3 ubiquitin-protein ligase complex which mediates the ubiquitination and subsequent proteasomal degradation of target proteins. May have a role in synapse differentiation and growth. This chain is Kelch-like protein diablo, found in Drosophila willistoni (Fruit fly).